A 308-amino-acid chain; its full sequence is Dihydroorotate dehydrogenase A (fumarate) (308 aa).

FMN-binding positions include Ser24 and 48 to 49; that span reads KS. Residues Lys48, 72 to 76, and Asn132 contribute to the substrate site; that span reads NANGL. Residue Asn132 coordinates FMN. Cys135 acts as the Nucleophile in catalysis. Positions 171 and 197 each coordinate FMN. 198–199 contributes to the substrate binding site; it reads NT. FMN-binding positions include Gly223 and 249-250; that span reads GG.

Belongs to the dihydroorotate dehydrogenase family. Type 1 subfamily. In terms of assembly, homodimer. The cofactor is FMN.

The protein resides in the cytoplasm. It catalyses the reaction (S)-dihydroorotate + fumarate = orotate + succinate. It functions in the pathway pyrimidine metabolism; UMP biosynthesis via de novo pathway. Functionally, catalyzes the conversion of dihydroorotate to orotate with fumarate as the electron acceptor. The polypeptide is Dihydroorotate dehydrogenase A (fumarate) (pyrD) (Limosilactobacillus reuteri (strain DSM 20016) (Lactobacillus reuteri)).